The chain runs to 62 residues: DNA-binding protein 7b (62 aa).

The protein belongs to the 7 kDa DNA-binding/endoribonuclease P2 family. Monomer.

The protein localises to the cytoplasm. Functionally, can constrain negative DNA supercoils. May be involved in maintaining the integrity of the genome at high temperature. This is DNA-binding protein 7b from Acidianus hospitalis (strain W1).